Consider the following 244-residue polypeptide: 3-oxoacyl-[acyl-carrier-protein] reductase FabG (244 aa).

Residues 9–12, 60–61, and N87 each bind NADP(+); these read GASR and NV. S139 lines the substrate pocket. Y152 functions as the Proton acceptor in the catalytic mechanism. Residues 152-156 and I185 contribute to the NADP(+) site; that span reads YVATK.

It belongs to the short-chain dehydrogenases/reductases (SDR) family. Homotetramer.

It carries out the reaction a (3R)-hydroxyacyl-[ACP] + NADP(+) = a 3-oxoacyl-[ACP] + NADPH + H(+). It participates in lipid metabolism; fatty acid biosynthesis. In terms of biological role, catalyzes the NADPH-dependent reduction of beta-ketoacyl-ACP substrates to beta-hydroxyacyl-ACP products, the first reductive step in the elongation cycle of fatty acid biosynthesis. The protein is 3-oxoacyl-[acyl-carrier-protein] reductase FabG (fabG) of Staphylococcus epidermidis (strain ATCC 35984 / DSM 28319 / BCRC 17069 / CCUG 31568 / BM 3577 / RP62A).